A 330-amino-acid polypeptide reads, in one-letter code: MKKTVLSGVQATGSLHLGNYLGSIRNWVKMQEEYNCFFFLADLHAITVDIKPSELNNSIMGVLAVYLAAGLNPDKVTIFAQSMVKEHAELAWLLNCVTPLGWLKRMTQFKDKAGSDQEKACLGLFSYPVLMAADILIYKADIVPVGEDQKQHLELTRDIAGVINRRFDKEILKVPEVLISETGTRIMSLRDGLKKMSKSDISDFSRINLKDDNDLIHQKIKKAKTDHLSFVSYDKETRPEISNLLDIYRSLSEESLEKIINNYQNQGFSKFKEDLAEIIITNLQPIRDKYLELMNDKEYLLKILHKGAEKARIRASETVNEVKEQFGFVI.

ATP-binding positions include 10–12 and 18–19; these read QAT and GN. A 'HIGH' region motif is present at residues 11-19; it reads ATGSLHLGN. Asp-134 serves as a coordination point for L-tryptophan. Residues 146–148, Ile-186, and 195–199 each bind ATP; these read GED and KMSKS. The short motif at 195–199 is the 'KMSKS' region element; it reads KMSKS.

Belongs to the class-I aminoacyl-tRNA synthetase family. As to quaternary structure, homodimer.

It localises to the cytoplasm. The enzyme catalyses tRNA(Trp) + L-tryptophan + ATP = L-tryptophyl-tRNA(Trp) + AMP + diphosphate + H(+). In terms of biological role, catalyzes the attachment of tryptophan to tRNA(Trp). The sequence is that of Tryptophan--tRNA ligase from Rickettsia felis (strain ATCC VR-1525 / URRWXCal2) (Rickettsia azadi).